Reading from the N-terminus, the 112-residue chain is MKKVEAIIRPFKLDEVKIALVNAGIVGMTVSEVRGFGRQKGQTERYRGSEYTVEFLQKLKVEIVVDDNQVDMVVDKIIAAARTGEIGDGKIFISPVEQVIRIRTGEKNTEAV.

Phosphoserine is present on serine 49. Tyrosine 51 carries the post-translational modification O-UMP-tyrosine.

This sequence belongs to the P(II) protein family. As to quaternary structure, homotrimer. In terms of processing, phosphorylation dependent on the nitrogen source and spectral light quality.

In terms of biological role, P-II indirectly controls the transcription of the GS gene (glnA). P-II prevents NR-II-catalyzed conversion of NR-I to NR-I-phosphate, the transcriptional activator of glnA. When P-II is phosphorylated, these events are reversed. In nitrogen-limiting conditions, when the ratio of Gln to 2-ketoglutarate decreases, P-II is phosphorylated which allows the deadenylation of glutamine synthetase (GS), thus activating the enzyme. This is Nitrogen regulatory protein P-II (glnB) from Nostoc punctiforme (strain ATCC 29133 / PCC 73102).